Reading from the N-terminus, the 335-residue chain is N-acetyl-gamma-glutamyl-phosphate reductase (335 aa).

The active site involves Cys156.

It belongs to the NAGSA dehydrogenase family. Type 1 subfamily.

The protein localises to the cytoplasm. It carries out the reaction N-acetyl-L-glutamate 5-semialdehyde + phosphate + NADP(+) = N-acetyl-L-glutamyl 5-phosphate + NADPH + H(+). It functions in the pathway amino-acid biosynthesis; L-arginine biosynthesis; N(2)-acetyl-L-ornithine from L-glutamate: step 3/4. Functionally, catalyzes the NADPH-dependent reduction of N-acetyl-5-glutamyl phosphate to yield N-acetyl-L-glutamate 5-semialdehyde. This is N-acetyl-gamma-glutamyl-phosphate reductase from Tolumonas auensis (strain DSM 9187 / NBRC 110442 / TA 4).